Consider the following 545-residue polypeptide: Chaperonin GroEL 2 (545 aa).

ATP is bound by residues 30–33 (TLGP), Lys51, 87–91 (DGTTT), Gly415, and Asp494. A disordered region spans residues 526–545 (EKGAGMPGMPPGGGYPGMGM). The segment covering 536 to 545 (PGGGYPGMGM) has biased composition (gly residues).

Belongs to the chaperonin (HSP60) family. As to quaternary structure, forms a cylinder of 14 subunits composed of two heptameric rings stacked back-to-back. Interacts with the co-chaperonin GroES.

The protein resides in the cytoplasm. The catalysed reaction is ATP + H2O + a folded polypeptide = ADP + phosphate + an unfolded polypeptide.. In terms of biological role, together with its co-chaperonin GroES, plays an essential role in assisting protein folding. The GroEL-GroES system forms a nano-cage that allows encapsulation of the non-native substrate proteins and provides a physical environment optimized to promote and accelerate protein folding. This chain is Chaperonin GroEL 2, found in Syntrophus aciditrophicus (strain SB).